The primary structure comprises 1217 residues: MTIPEKPQGVIWTDAQWQSIYATGQDVLVAAAAGSGKTAVLVERIIQKILRDGIDVDRLLVVTFTNLSAREMKHRVDQRIQEASIADPANAHLKNQRIKIHQAQISTLHSFCLKLIQQHYDVLNIDPNFRTSSEAENILLLEQTIDEVIEQHYDILDPAFIELTEQLSSDRSDDQFRMIIKQLYFFSVANPNPTNWLDQLVTPYEEEAQQAQLIQILTDLSKVFITAAYDALNKAYDLFSMMDGVDKHLAVIEDERRLMGRVLEGGFIDIPYLTGHEFGARLPNITAKIKEANEMMVDALKDAKLQYKKYKSLIDKVKSDYFSREADDLKADMQQLAPRVKYLARIVKDVMSEFNRKKRSKNILDFSDYEHFALQILTNEDGSPSEIAESYRQHFQEILVDEYQDTNRVQEKILSCIKTGDEHNGNLFMVGDVKQSIYKFRQADPSLFIEKYQRFTIDGDGTGRRMDLSQNFRSRKEVLSTTNYIFKHMMDEQVGEVNYDESAQLYYGAPYDESDHPVNLKVLIEADQEHSDLTGSEQEAHFIVEQVKDILEHQKVYDMKTRSYRSATYKDIVILERSFGQARNLQQAFKNEDIPFHVNSREGYFEQTEVRLALSFLRAIDNPLQDIYLVGLMRSVIYQFKEDELAQIRILSPNDDYFYQSIVNYINDEAADAILVDKLKMFLSDIQSYQQYSKDHPVYQLIDKFYNDHYVIQYFSGLIGGRGRRANLYGLFNKAIEFENSSFRGLYQFIRFIDELIERGKDFGEENVVGPNDNVVRMMTIHSSKGLEFPFVIYSGLSKDFNKRDLKQPVILNQQFGLGMDYFDVDKEMAFPSLASVAYRAVAEKELVSEEMRLVYVALTRAKEQLYLIGRVKNDKSLLELEQLSISGEHIAVNERLTSPNPFHLIYSILSKHQSASIPDDLKFEKDIAQVEDSSRPNVNISIIYFEDVSTETILDNDEYRSVNQLETMQNGNEDVKAQIKHQLDYQYPYVNDTKKPSKQSVSELKRQYETEESGTSYERVRQYRIGFSTYERPKFLSEQGKRKANEIGTLMHTVMQHLPFKKERISEVELHQYIDGLIDKHIIEADAKKDIRMDEIMTFINSELYSIIAEAEQVYRELPFVVNQALVDQLPQGDEDVSIIQGMIDLIFVKDGVHYFVDYKTDAFNRRRGMTDEEIGTQLKNKYKIQMKYYQNTLQTILNKEVKGYLYFFKFGTLQL.

Residues 10 to 475 form the UvrD-like helicase ATP-binding domain; the sequence is VIWTDAQWQS…MDLSQNFRSR (466 aa). 31-38 contributes to the ATP binding site; sequence AAAGSGKT. A UvrD-like helicase C-terminal domain is found at 491 to 786; that stretch reads DEQVGEVNYD…RMMTIHSSKG (296 aa).

It belongs to the helicase family. AddA subfamily. Heterodimer of AddA and AddB/RexB. Mg(2+) serves as cofactor.

The enzyme catalyses Couples ATP hydrolysis with the unwinding of duplex DNA by translocating in the 3'-5' direction.. It catalyses the reaction ATP + H2O = ADP + phosphate + H(+). Functionally, the heterodimer acts as both an ATP-dependent DNA helicase and an ATP-dependent, dual-direction single-stranded exonuclease. Recognizes the chi site generating a DNA molecule suitable for the initiation of homologous recombination. The AddA nuclease domain is required for chi fragment generation; this subunit has the helicase and 3' -&gt; 5' nuclease activities. In Staphylococcus aureus (strain bovine RF122 / ET3-1), this protein is ATP-dependent helicase/nuclease subunit A.